A 141-amino-acid chain; its full sequence is Putative pre-16S rRNA nuclease (141 aa).

The protein belongs to the YqgF nuclease family.

It localises to the cytoplasm. Its function is as follows. Could be a nuclease involved in processing of the 5'-end of pre-16S rRNA. This chain is Putative pre-16S rRNA nuclease, found in Cupriavidus taiwanensis (strain DSM 17343 / BCRC 17206 / CCUG 44338 / CIP 107171 / LMG 19424 / R1) (Ralstonia taiwanensis (strain LMG 19424)).